The sequence spans 154 residues: 6,7-dimethyl-8-ribityllumazine synthase (154 aa).

5-amino-6-(D-ribitylamino)uracil contacts are provided by residues F22, 56-58 (SFE), and 81-83 (VLI). 86 to 87 (ET) is a binding site for (2S)-2-hydroxy-3-oxobutyl phosphate. The active-site Proton donor is the H89. F114 contacts 5-amino-6-(D-ribitylamino)uracil. R128 lines the (2S)-2-hydroxy-3-oxobutyl phosphate pocket.

It belongs to the DMRL synthase family.

It carries out the reaction (2S)-2-hydroxy-3-oxobutyl phosphate + 5-amino-6-(D-ribitylamino)uracil = 6,7-dimethyl-8-(1-D-ribityl)lumazine + phosphate + 2 H2O + H(+). It functions in the pathway cofactor biosynthesis; riboflavin biosynthesis; riboflavin from 2-hydroxy-3-oxobutyl phosphate and 5-amino-6-(D-ribitylamino)uracil: step 1/2. Catalyzes the formation of 6,7-dimethyl-8-ribityllumazine by condensation of 5-amino-6-(D-ribitylamino)uracil with 3,4-dihydroxy-2-butanone 4-phosphate. This is the penultimate step in the biosynthesis of riboflavin. The polypeptide is 6,7-dimethyl-8-ribityllumazine synthase (Chlamydia caviae (strain ATCC VR-813 / DSM 19441 / 03DC25 / GPIC) (Chlamydophila caviae)).